We begin with the raw amino-acid sequence, 130 residues long: MVESIVEKCVEQVHNRFKLVLLASQRTHDLSTGASDPVEMVKFKDHKDTIVSLYEIAEKKVNTHELFNLLVKRCKEHMKGNTDNTYINSPSKLANLLNFSDHQLNTSLDVSQESHDDEIDDQDSGEEVPI.

The interval 107-130 (SLDVSQESHDDEIDDQDSGEEVPI) is disordered. Acidic residues predominate over residues 115-130 (HDDEIDDQDSGEEVPI).

Belongs to the RNA polymerase subunit omega family. As to quaternary structure, the RNAP catalytic core consists of 2 alpha, 1 beta, 1 beta' and 1 omega subunit. When a sigma factor is associated with the core the holoenzyme is formed, which can initiate transcription.

It catalyses the reaction RNA(n) + a ribonucleoside 5'-triphosphate = RNA(n+1) + diphosphate. Functionally, promotes RNA polymerase assembly. Latches the N- and C-terminal regions of the beta' subunit thereby facilitating its interaction with the beta and alpha subunits. This is DNA-directed RNA polymerase subunit omega from Wolbachia pipientis subsp. Culex pipiens (strain wPip).